The following is a 214-amino-acid chain: Pyridoxine/pyridoxamine 5'-phosphate oxidase (214 aa).

Residues R9 to Y12 and K67 each bind substrate. Residues R62–K67, F77–T78, K84, and Q106 contribute to the FMN site. Substrate contacts are provided by Y124, R128, and S132. FMN is bound by residues Q141–S142 and W186. R192–H194 is a substrate binding site. Residue R196 participates in FMN binding.

Belongs to the pyridoxamine 5'-phosphate oxidase family. In terms of assembly, homodimer. It depends on FMN as a cofactor.

The enzyme catalyses pyridoxamine 5'-phosphate + O2 + H2O = pyridoxal 5'-phosphate + H2O2 + NH4(+). The catalysed reaction is pyridoxine 5'-phosphate + O2 = pyridoxal 5'-phosphate + H2O2. Its pathway is cofactor metabolism; pyridoxal 5'-phosphate salvage; pyridoxal 5'-phosphate from pyridoxamine 5'-phosphate: step 1/1. The protein operates within cofactor metabolism; pyridoxal 5'-phosphate salvage; pyridoxal 5'-phosphate from pyridoxine 5'-phosphate: step 1/1. Catalyzes the oxidation of either pyridoxine 5'-phosphate (PNP) or pyridoxamine 5'-phosphate (PMP) into pyridoxal 5'-phosphate (PLP). This Microcystis aeruginosa (strain NIES-843 / IAM M-2473) protein is Pyridoxine/pyridoxamine 5'-phosphate oxidase.